Here is a 247-residue protein sequence, read N- to C-terminus: Flavin-dependent thymidylate synthase (247 aa).

A ThyX domain is found at methionine 1 to glutamate 237. Residues glutamine 85–arginine 88, serine 98–arginine 100, and arginine 176 each bind dUMP. Position 88-90 (arginine 88–arginine 90) interacts with FAD. The ThyX motif motif lies at arginine 88 to serine 98. Residues asparagine 192–arginine 194 and histidine 198 each bind FAD. Arginine 203 lines the dUMP pocket. The active-site Involved in ionization of N3 of dUMP, leading to its activation is the arginine 203.

Belongs to the thymidylate synthase ThyX family. Homotetramer. The cofactor is FAD.

It carries out the reaction dUMP + (6R)-5,10-methylene-5,6,7,8-tetrahydrofolate + NADPH + H(+) = dTMP + (6S)-5,6,7,8-tetrahydrofolate + NADP(+). It functions in the pathway pyrimidine metabolism; dTTP biosynthesis. Functionally, catalyzes the reductive methylation of 2'-deoxyuridine-5'-monophosphate (dUMP) to 2'-deoxythymidine-5'-monophosphate (dTMP) while utilizing 5,10-methylenetetrahydrofolate (mTHF) as the methyl donor, and NADPH and FADH(2) as the reductant. The protein is Flavin-dependent thymidylate synthase of Haloarcula marismortui (strain ATCC 43049 / DSM 3752 / JCM 8966 / VKM B-1809) (Halobacterium marismortui).